The chain runs to 567 residues: Glucose-6-phosphate isomerase, cytosolic (567 aa).

The active-site Proton donor is the E360. Residues H391 and K516 contribute to the active site.

It belongs to the GPI family. Homodimer.

It localises to the cytoplasm. It carries out the reaction alpha-D-glucose 6-phosphate = beta-D-fructose 6-phosphate. It functions in the pathway carbohydrate degradation; glycolysis; D-glyceraldehyde 3-phosphate and glycerone phosphate from D-glucose: step 2/4. The sequence is that of Glucose-6-phosphate isomerase, cytosolic (PHI1) from Zea mays (Maize).